Consider the following 81-residue polypeptide: Defensin-like protein b (81 aa).

Residues 1-26 (MRNATFFIVFYVFISLVLSNVQDVTA) form the signal peptide. 4 disulfides stabilise this stretch: Cys31–Cys81, Cys42–Cys66, Cys50–Cys76, and Cys64–Cys78.

This sequence belongs to the DEFL family. As to expression, expressed in microspores and in young and mature anthers.

Its subcellular location is the secreted. In terms of biological role, involved in self-incompatibility. The protein is Defensin-like protein b (SCRb-1) of Arabidopsis lyrata (Lyre-leaved rock-cress).